Consider the following 287-residue polypeptide: Pyridoxal 5'-phosphate synthase subunit PdxS (287 aa).

D21 contacts D-ribose 5-phosphate. K78 serves as the catalytic Schiff-base intermediate with D-ribose 5-phosphate. Position 150 (G150) interacts with D-ribose 5-phosphate. R162 contributes to the D-glyceraldehyde 3-phosphate binding site. Residues G211 and 232-233 (GS) each bind D-ribose 5-phosphate.

It belongs to the PdxS/SNZ family. In the presence of PdxT, forms a dodecamer of heterodimers.

It carries out the reaction aldehydo-D-ribose 5-phosphate + D-glyceraldehyde 3-phosphate + L-glutamine = pyridoxal 5'-phosphate + L-glutamate + phosphate + 3 H2O + H(+). It functions in the pathway cofactor biosynthesis; pyridoxal 5'-phosphate biosynthesis. Catalyzes the formation of pyridoxal 5'-phosphate from ribose 5-phosphate (RBP), glyceraldehyde 3-phosphate (G3P) and ammonia. The ammonia is provided by the PdxT subunit. Can also use ribulose 5-phosphate and dihydroxyacetone phosphate as substrates, resulting from enzyme-catalyzed isomerization of RBP and G3P, respectively. The protein is Pyridoxal 5'-phosphate synthase subunit PdxS of Tropheryma whipplei (strain TW08/27) (Whipple's bacillus).